The primary structure comprises 351 residues: Renin receptor (351 aa).

An N-terminal signal peptide occupies residues 1-17 (MAVLVVFLSFLVADVFG). At 18-303 (NEFSILRSPG…YNLAYKYNFE (286 aa)) the chain is on the extracellular side. The chain crosses the membrane as a helical span at residues 304–324 (YPVVFNLVLWIMIGLALTLIV). The Cytoplasmic portion of the chain corresponds to 325–351 (TCYNIWNMDPGYDSIIYRMTNQKIRMD). Positions 347 to 351 (KIRMD) match the Mediates retrograde transport to the ER motif.

As to quaternary structure, interacts with renin. Accessory component of the multisubunit proton-transporting vacuolar (V)-ATPase protein pump. Interacts (via N-terminus) with ATP6AP1 (via N-terminus). Interacts with ATP6V0D1; ATP6V0D1 is a V-ATPase complex subunit and the interaction promotes V-ATPase complex assembly. Interacts with TMEM9; TMEM9 is a V-ATPase assembly regulator and the interaction induces the interaction with ATP6V0D1. Interacts with VMA21 (via N-terminus); VMA21 is a V-ATPase accessory component. In terms of processing, phosphorylated. Proteolytically cleaved by a furin-like convertase in the trans-Golgi network to generate N- and C-terminal fragments. Expressed in the brain.

It localises to the endoplasmic reticulum membrane. The protein localises to the lysosome membrane. Its subcellular location is the cytoplasmic vesicle. It is found in the autophagosome membrane. The protein resides in the cell projection. It localises to the dendritic spine membrane. The protein localises to the axon. Its subcellular location is the endosome membrane. It is found in the clathrin-coated vesicle membrane. The protein resides in the secretory vesicle. It localises to the synaptic vesicle membrane. Its function is as follows. Multifunctional protein which functions as a renin, prorenin cellular receptor and is involved in the assembly of the lysosomal proton-transporting V-type ATPase (V-ATPase) and the acidification of the endo-lysosomal system. May mediate renin-dependent cellular responses by activating ERK1 and ERK2. By increasing the catalytic efficiency of renin in AGT/angiotensinogen conversion to angiotensin I, may also play a role in the renin-angiotensin system (RAS). Through its function in V-type ATPase (v-ATPase) assembly and acidification of the lysosome it regulates protein degradation and may control different signaling pathways important for proper brain development, synapse morphology and synaptic transmission. This is Renin receptor (ATP6AP2) from Bos taurus (Bovine).